A 315-amino-acid chain; its full sequence is Protoheme IX farnesyltransferase (315 aa).

9 helical membrane passes run 32-52 (VMSLVVFTGLVGLVLAPGHMN), 53-73 (PVLAVISILCIAVGAGASGAL), 93-113 (IPAGIIAPNQVLAFGLTLSAF), 120-140 (LMVNWLAAALLAFTIFFYAVI), 153-173 (IVIGGAAGAFPPMIGWAAATG), 180-200 (LVLFMIIFLWTPPHFWALSLF), 226-246 (ALFYAVLMAPVGVLPWVMGFA), 249-269 (FYGVVSTLLGLAFVYYAWRLW), and 295-315 (IFAVLLFEALTFKLLAAFGVF).

Belongs to the UbiA prenyltransferase family. Protoheme IX farnesyltransferase subfamily.

Its subcellular location is the cell inner membrane. The enzyme catalyses heme b + (2E,6E)-farnesyl diphosphate + H2O = Fe(II)-heme o + diphosphate. Its pathway is porphyrin-containing compound metabolism; heme O biosynthesis; heme O from protoheme: step 1/1. Its function is as follows. Converts heme B (protoheme IX) to heme O by substitution of the vinyl group on carbon 2 of heme B porphyrin ring with a hydroxyethyl farnesyl side group. This chain is Protoheme IX farnesyltransferase, found in Brucella suis (strain ATCC 23445 / NCTC 10510).